Here is a 365-residue protein sequence, read N- to C-terminus: G-protein coupled receptor 4 (365 aa).

Over 1-10 the chain is Extracellular; the sequence is MDNSTGTWEG. Asparagine 3 carries N-linked (GlcNAc...) asparagine glycosylation. A helical membrane pass occupies residues 11–47; it reads CHVDSRVDHLFPPSLYIFVIGVGLPTNCLALWAAYRQ. Cystine bridges form between cysteine 11-cysteine 260 and cysteine 92-cysteine 170. Residues 48 to 51 lie on the Cytoplasmic side of the membrane; it reads VRQR. The helical transmembrane segment at 52 to 82 threads the bilayer; that stretch reads NELGVYLMNLSIADLLYICTLPLWVDYFLHH. The Extracellular portion of the chain corresponds to 83–87; it reads DNWIH. Residues 88–123 traverse the membrane as a helical segment; that stretch reads GPGSCKLFGFIFYSNIYISIAFLCCISVDRYLAVAH. Residues 124–131 are Cytoplasmic-facing; it reads PLRFARLR. Residues 132 to 158 traverse the membrane as a helical segment; it reads RVKTAVAVSSVVWATELGANSAPLFHD. The Extracellular portion of the chain corresponds to 159–174; that stretch reads ELFRDRYNHTFCFEKF. The segment at 159–174 is extracellular loop 2 (ECL2); that stretch reads ELFRDRYNHTFCFEKF. Asparagine 166 carries N-linked (GlcNAc...) asparagine glycosylation. Residues 175–212 traverse the membrane as a helical segment; that stretch reads PMERWVAWMNLYRVFVGFLFPWALMLLCYRGILRAVQS. Residues 213-216 lie on the Cytoplasmic side of the membrane; the sequence is SVST. A helical transmembrane segment spans residues 217–252; sequence ERQEKVKIKRLALSLIAIVLVCFAPYHALLLSRSAV. The Extracellular segment spans residues 253-262; that stretch reads YLGRPWDCGF. The helical transmembrane segment at 263-291 threads the bilayer; sequence EERVFSAYHSSLAFTSLNCVADPILYCLV. Topologically, residues 292–365 are cytoplasmic; it reads NEGARSDVAK…PLKVLLPPAQ (74 aa).

The protein belongs to the G-protein coupled receptor 1 family.

The protein resides in the cell membrane. Activated by a network of residues that connects an extracellular-facing cavity to Glu-147, a conserved charged residue buried in the transmembrane core of the receptor. Protonation likely drives conformational changes in extracellular loop 2 (ECL2), which stabilizes movement of transmembrane 3 (TM3) and a series of rearrangements that connect the extracellular-facing cavity to Glu-147, a residue only conserved in proton-sensing G-protein coupled receptors. Proton-sensing G-protein coupled receptor activated by extracellular pH, which is required to monitor pH changes and generate adaptive reactions. Activated by an optimal pH of 6.8-7.2. Ligand binding causes a conformation change that triggers signaling via guanine nucleotide-binding proteins (G proteins) and modulates the activity of downstream effectors, such as adenylate cyclase. GPR4 is mainly coupled to G(s) G proteins and mediates activation of adenylate cyclase activity. May also couple with G(q) and G(12)/G(13) G proteins. Acts as a key regulator of respiratory sensitivity to CO2/H(+) in brain retrotrapezoid nucleus neurons: acts by mediating detection of protons generated by the formation of carbonic acid in the blood, an important mechanism to impulse to breathe. Also acts as a regulator of acid secretion in the kidney collecting duct by maintaining acid-base homeostasis in the kidney. Acidosis-induced GPR4 activation increases paracellular gap formation and permeability of vascular endothelial cells, possibly through the G(12)/G(13)/Rho GTPase signaling pathway. The chain is G-protein coupled receptor 4 from Rattus norvegicus (Rat).